Reading from the N-terminus, the 529-residue chain is Sodium/hydrogen exchanger 4 (529 aa).

Residues 1–19 are Cytoplasmic-facing; it reads MSIGLTEFVTNKLAAEHPQ. A helical transmembrane segment spans residues 20–40; the sequence is VIPISVFIAILCLCLVIGHLL. The Vacuolar portion of the chain corresponds to 41-45; that stretch reads EENRW. The helical transmembrane segment at 46–66 threads the bilayer; sequence VNESITAILVGAASGTVILLI. Over 67–73 the chain is Cytoplasmic; it reads SKGKSSH. The segment at residues 74 to 94 is an intramembrane region (helical); that stretch reads ILVFDEELFFIYLLPPIIFNA. At 95–112 the chain is on the cytoplasmic side; it reads GFQVKKKKFFHNFLTIMS. A helical membrane pass occupies residues 113 to 133; that stretch reads FGVIGVFISTVIISFGTWWLF. At 134–171 the chain is on the vacuolar side; sequence PKLGFKGLSARDYLAIGTIFSSTDTVCTLQILHQDETP. The helical transmembrane segment at 172–192 threads the bilayer; sequence LLYSLVFGEGVVNDATSVVLF. Over 193–214 the chain is Cytoplasmic; it reads NAVQKIQFESLTGWTALQVFGN. A helical transmembrane segment spans residues 215 to 235; it reads FLYLFSTSTLLGIGVGLITSF. Over 236–250 the chain is Vacuolar; that stretch reads VLKTLYFGRHSTTRE. Residues 251 to 267 form a helical membrane-spanning segment; it reads LAIMVLMAYLSYMLAEL. At 268-273 the chain is on the cytoplasmic side; it reads FSLSGI. Residues 274–291 traverse the membrane as a helical segment; it reads LTVFFCGVLMSHYASYNV. At 292–301 the chain is on the vacuolar side; that stretch reads TESSRITSRH. The helical transmembrane segment at 302–322 threads the bilayer; sequence VFAMLSFIAETFIFLYVGTDA. The Cytoplasmic segment spans residues 323-342; it reads LDFTKWKTSSLSFGGTLGVS. Residues 343–363 traverse the membrane as a helical segment; the sequence is GVITALVLLGRAAFVFPLSVL. The Vacuolar portion of the chain corresponds to 364-380; sequence TNFMNRHTERNESITFK. Asn-374 carries an N-linked (GlcNAc...) asparagine glycan. Residues 381-401 traverse the membrane as a helical segment; the sequence is HQVIIWWAGLMRGAVSIALAF. Over 402 to 415 the chain is Cytoplasmic; the sequence is KQFTYSGVTLDPVN. A helical membrane pass occupies residues 416–436; that stretch reads AAMVTNTTIVVLFTTLVFGFL. Residues 437 to 529 are Vacuolar-facing; that stretch reads TKPLVNYLLP…GPRRENQPEC (93 aa).

It belongs to the monovalent cation:proton antiporter 1 (CPA1) transporter (TC 2.A.36) family. As to expression, expressed at very low levels in roots and shoots.

It is found in the vacuole membrane. The catalysed reaction is Na(+)(in) + H(+)(out) = Na(+)(out) + H(+)(in). The enzyme catalyses K(+)(in) + H(+)(out) = K(+)(out) + H(+)(in). Its function is as follows. May act in low affinity electroneutral exchange of protons for cations such as Na(+) or K(+) across membranes. May also exchange Li(+) and Cs(+) with a lower affinity. The polypeptide is Sodium/hydrogen exchanger 4 (NHX4) (Arabidopsis thaliana (Mouse-ear cress)).